A 339-amino-acid chain; its full sequence is Glyceraldehyde-3-phosphate dehydrogenase (339 aa).

NAD(+)-binding positions include 12–13 (RI), aspartate 39, arginine 84, and serine 127. Residues 157 to 159 (SCT), threonine 188, arginine 203, 216 to 217 (TG), and arginine 239 each bind D-glyceraldehyde 3-phosphate. The Nucleophile role is filled by cysteine 158. Asparagine 320 contributes to the NAD(+) binding site.

This sequence belongs to the glyceraldehyde-3-phosphate dehydrogenase family. In terms of assembly, homotetramer.

It localises to the cytoplasm. The enzyme catalyses D-glyceraldehyde 3-phosphate + phosphate + NAD(+) = (2R)-3-phospho-glyceroyl phosphate + NADH + H(+). Its pathway is carbohydrate degradation; glycolysis; pyruvate from D-glyceraldehyde 3-phosphate: step 1/5. Catalyzes the oxidative phosphorylation of glyceraldehyde 3-phosphate (G3P) to 1,3-bisphosphoglycerate (BPG) using the cofactor NAD. The first reaction step involves the formation of a hemiacetal intermediate between G3P and a cysteine residue, and this hemiacetal intermediate is then oxidized to a thioester, with concomitant reduction of NAD to NADH. The reduced NADH is then exchanged with the second NAD, and the thioester is attacked by a nucleophilic inorganic phosphate to produce BPG. The chain is Glyceraldehyde-3-phosphate dehydrogenase (gap) from Mycobacterium bovis (strain ATCC BAA-935 / AF2122/97).